We begin with the raw amino-acid sequence, 69 residues long: Probable Sec-independent protein translocase protein TatE (69 aa).

A helical membrane pass occupies residues 1–21 (MEGISIAKLLVIGALIVLLFG). Positions 45 to 69 (DDQPAAKSSAQDEHPAAISETRPKE) are disordered. The segment covering 54–69 (AQDEHPAAISETRPKE) has biased composition (basic and acidic residues).

It belongs to the TatA/E family. TatE subfamily.

It is found in the cell inner membrane. Functionally, part of the twin-arginine translocation (Tat) system that transports large folded proteins containing a characteristic twin-arginine motif in their signal peptide across membranes. TatE shares overlapping functions with TatA. The protein is Probable Sec-independent protein translocase protein TatE of Dickeya chrysanthemi (strain Ech1591) (Dickeya zeae (strain Ech1591)).